A 465-amino-acid polypeptide reads, in one-letter code: Gamma-aminobutyric acid receptor subunit rho-2 (465 aa).

Positions Met1 to Ser20 are cleaved as a signal peptide. The Extracellular segment spans residues Arg21–His260. Residue Arg105 coordinates 4-aminobutanoate. An N-linked (GlcNAc...) asparagine glycan is attached at Asn120. Ser169 is a binding site for 4-aminobutanoate. The cysteines at positions 178 and 192 are disulfide-linked. Glu197 provides a ligand contact to 4-aminobutanoate. N-linked (GlcNAc...) asparagine glycosylation is present at Asn254. The chain crosses the membrane as a helical span at residues Ile261–Val281. The Cytoplasmic portion of the chain corresponds to Ser282–Arg293. Residues Val294 to Ser314 traverse the membrane as a helical segment. Over Met315–Asp325 the chain is Extracellular. Residues Ile326–Asn346 traverse the membrane as a helical segment. Residues Tyr347 to Tyr444 are Cytoplasmic-facing. Residues Ser445–Ala465 traverse the membrane as a helical segment.

The protein belongs to the ligand-gated ion channel (TC 1.A.9) family. Gamma-aminobutyric acid receptor (TC 1.A.9.5) subfamily. GABRR2 sub-subfamily. In terms of assembly, three rho subunits (rho-1/GBRR1, rho-2/GBRR2 and rho-3/GBRR3) coassemble either to form functional homopentamers or heteropentamers. Rho-2 is unable to form a functional homopentamer. Interacts with SQSTM1.

The protein resides in the postsynaptic cell membrane. It is found in the cell membrane. It carries out the reaction chloride(in) = chloride(out). In terms of biological role, rho subunit of the pentameric ligand-gated chloride channels responsible for mediating the effects of gamma-aminobutyric acid (GABA), the major inhibitory neurotransmitter in the brain. Rho-containing GABA-gated chloride channels are a subclass of GABA(A) receptors (GABAARs) entirely composed of rho subunits, where GABA molecules bind at the rho intersubunit interfaces. When activated by GABA, rho-GABAARs selectively allow the flow of chloride anions across the cell membrane down their electrochemical gradient. Rho-2 GABAARs may contribute to the regulation of glial development in the cerebellum by controlling extrasynaptic transmission. Rho-2 GABAARs are also involved in neuronal tonic (extrasynaptic) and phasic (synaptic) transmission in the Purkinje neurons of the cerebellum. Rho-2 GABAARs expressed in retina may play a role in retinal neurotransmission. The polypeptide is Gamma-aminobutyric acid receptor subunit rho-2 (GABRR2) (Bos taurus (Bovine)).